The primary structure comprises 292 residues: Transcription factor HFR1 (292 aa).

Positions 114 to 153 are disordered; that stretch reads KRRIQVLSSDDESEEFTREVPSVTRKGSKRRRRDEKMSNK. Residues 134–147 form a basic motif; degenerate region; it reads PSVTRKGSKRRRRD. The region spanning 134–183 is the bHLH domain; the sequence is PSVTRKGSKRRRRDEKMSNKMRKLQQLVPNCHKTDKVSVLDKTIEYMKNL. The segment covering 139 to 153 has biased composition (basic residues); the sequence is KGSKRRRRDEKMSNK. Residues 141–148 carry the Nuclear localization signal motif; it reads SKRRRRDE. The tract at residues 148 to 183 is helix-loop-helix motif; that stretch reads EKMSNKMRKLQQLVPNCHKTDKVSVLDKTIEYMKNL.

Binds to FHY1 and FHL. Forms PHYA/FHY1/HFR1 complex. Homodimer and heterodimer with PIF3. Do not interact alone with either phytochrome A (phyA) or B (phyB), but REP1/PIF3 complex binds to phyA and phyB, preferentially to the Pfr forms. Forms non-functional heterodimer with PRE6, causing liberation of PIF4 from the transcriptionally inactive complex HFR1-PIF4. Repressed when bound to PRE1, PRE2 and PRE4. As to expression, mainly expressed in fruits and flowers and, to a lower extent, in leaves, stems, seedlings and roots.

It is found in the nucleus. Its function is as follows. Atypical bHLH transcription factor that regulates photomorphogenesis through modulation of phytochrome (e.g. PHYA) and cryptochrome signalings. Suppresses the transcriptional regulation activity of PIF4 by forming non-DNA-binding heterodimer. In Arabidopsis thaliana (Mouse-ear cress), this protein is Transcription factor HFR1.